We begin with the raw amino-acid sequence, 235 residues long: tRNA (guanine-N(1)-)-methyltransferase (235 aa).

S-adenosyl-L-methionine-binding positions include Gly-112 and 132-137 (LGDFVL).

This sequence belongs to the RNA methyltransferase TrmD family. As to quaternary structure, homodimer.

The protein localises to the cytoplasm. It carries out the reaction guanosine(37) in tRNA + S-adenosyl-L-methionine = N(1)-methylguanosine(37) in tRNA + S-adenosyl-L-homocysteine + H(+). In terms of biological role, specifically methylates guanosine-37 in various tRNAs. In Acaryochloris marina (strain MBIC 11017), this protein is tRNA (guanine-N(1)-)-methyltransferase.